The primary structure comprises 1146 residues: Large proline-rich protein BAG6 (1146 aa).

An N-acetylmethionine modification is found at Met-1. The Ubiquitin-like domain occupies 17–92 (LEVLVKTLDS…HLVERAPPQT (76 aa)). Disordered stretches follow at residues 87–128 (RAPP…HDRN), 186–268 (RGGT…HPSP), 381–436 (TMTG…TSHP), 457–525 (QDSG…QGAG), and 555–618 (PGMA…SAAD). At Ser-96 the chain carries Phosphoserine. The segment covering 96–108 (SGASSGTGSASAT) has biased composition (low complexity). A compositionally biased stretch (gly residues) spans 109 to 122 (HGGGPLPGTRGPGA). Position 117 is a phosphothreonine (Thr-117). Polar residues predominate over residues 208–217 (VALNSQTSEP). 2 tandem repeats follow at residues 236 to 265 (RPPTQTPELPPSGPAPAGPAPAPETNAPNH) and 410 to 438 (PSSATVDSSTEGAPPPGPAPPPATSHPRV). Positions 236–650 (RPPTQTPELP…LASPTITVAV (415 aa)) are 4 X 29 AA approximate repeats. Residues 239–257 (TQTPELPPSGPAPAGPAPA) are compositionally biased toward pro residues. Positions 394 to 413 (GAEAASPGSGQASSLPPSSA) are enriched in low complexity. 2 stretches are compositionally biased toward pro residues: residues 422–433 (APPPGPAPPPAT) and 502–515 (PTPPQARPSHPGGP). Low complexity-rich tracts occupy residues 555-573 (PGMAPASASAPATAQAQAP) and 583-601 (PATASASAGTTNTATTAGP). Tandem repeats lie at residues 589 to 616 (SAGTTNTATTAGPAPGGPAQPPPPQPSA) and 622 to 650 (SQLLGNLLGPAGPGAGGPSLASPTITVAV). Residues 603–614 (PGGPAQPPPPQP) show a composition bias toward pro residues. 2 disordered regions span residues 666 to 711 (ASQA…ESLP) and 961 to 1146 (PQAL…ADDP). The span at 670–694 (APPPPPPPPPPPPAPEQQTTPPPGS) shows a compositional bias: pro residues. Over residues 977–986 (TSPEPQREDA) the composition is skewed to basic and acidic residues. Ser-978 and Ser-987 each carry phosphoserine. A compositionally biased stretch (low complexity) spans 1021 to 1034 (AEPWAAAVPPEWVP). Residues 1024–1054 (WAAAVPPEWVPIIQQDIQSQRKVKPQPPLSD) form a required for interaction with GET4 region. The short motif at 1026 to 1068 (AAVPPEWVPIIQQDIQSQRKVKPQPPLSDAYLSGMPAKRRKTM) is the Nuclear localization site element. Residues 1036–1146 (IQQDIQSQRK…NAHRAFADDP (111 aa)) are sufficient for the delivery of client proteins to the endoplasmic reticulum. Residue Thr-1067 is modified to Phosphothreonine. The interval 1072-1129 (GPQLLLSEAVSRAAKAAGARPLTSPESLSRDLEAPEVQESYRQQLRSDIQKRLQEDPN) is BAG-similar domain, required and sufficient for interaction with UBL4A. Over residues 1080 to 1090 (AVSRAAKAAGA) the composition is skewed to low complexity. 2 positions are modified to phosphoserine: Ser-1095 and Ser-1131.

In terms of assembly, component of the BAG6/BAT3 complex, also named BAT3 complex, at least composed of BAG6, UBL4A and GET4/TRC35. Interacts with GET4; the interaction is direct and localizes BAG6 in the cytosol. Interacts with UBL4A; the interaction is direct and required for UBL4A protein stability. Interacts with AIFM1. Interacts with HSPA2. Interacts with CTCFL. Interacts with p300/EP300. Interacts (via ubiquitin-like domain) with RNF126; required for BAG6-dependent ubiquitination of proteins mislocalized to the cytosol. Interacts (via ubiquitin-like domain) with SGTA; SGTA competes with RNF126 by binding the same region of BAG6, thereby promoting deubiquitination of BAG6-target proteins and rescuing them from degradation. Interacts with ricin A chain. Interacts with VCP and AMFR; both form the VCP/p97-AMFR/gp78 complex. Interacts with SYVN1. Interacts with USP13; the interaction is direct and may mediate UBL4A deubiquitination. Interacts with ZFAND2B. Interacts with KPNA2. Interacts with UBQLN4. Ricin can induce a cleavage by the caspase CASP3. The released C-terminal peptide induces apoptosis.

The protein localises to the cytoplasm. It is found in the cytosol. It localises to the nucleus. Its subcellular location is the secreted. The protein resides in the extracellular exosome. In terms of biological role, ATP-independent molecular chaperone preventing the aggregation of misfolded and hydrophobic patches-containing proteins. Functions as part of a cytosolic protein quality control complex, the BAG6/BAT3 complex, which maintains these client proteins in a soluble state and participates in their proper delivery to the endoplasmic reticulum or alternatively can promote their sorting to the proteasome where they undergo degradation. The BAG6/BAT3 complex is involved in the post-translational delivery of tail-anchored/type II transmembrane proteins to the endoplasmic reticulum membrane. Recruited to ribosomes, it interacts with the transmembrane region of newly synthesized tail-anchored proteins and together with SGTA and ASNA1 mediates their delivery to the endoplasmic reticulum. Client proteins that cannot be properly delivered to the endoplasmic reticulum are ubiquitinated by RNF126, an E3 ubiquitin-protein ligase associated with BAG6 and are sorted to the proteasome. SGTA which prevents the recruitment of RNF126 to BAG6 may negatively regulate the ubiquitination and the proteasomal degradation of client proteins. Similarly, the BAG6/BAT3 complex also functions as a sorting platform for proteins of the secretory pathway that are mislocalized to the cytosol either delivering them to the proteasome for degradation or to the endoplasmic reticulum. The BAG6/BAT3 complex also plays a role in the endoplasmic reticulum-associated degradation (ERAD), a quality control mechanism that eliminates unwanted proteins of the endoplasmic reticulum through their retrotranslocation to the cytosol and their targeting to the proteasome. It maintains these retrotranslocated proteins in an unfolded yet soluble state condition in the cytosol to ensure their proper delivery to the proteasome. BAG6 is also required for selective ubiquitin-mediated degradation of defective nascent chain polypeptides by the proteasome. In this context, it may participate in the production of antigenic peptides and play a role in antigen presentation in immune response. BAG6 is also involved in endoplasmic reticulum stress-induced pre-emptive quality control, a mechanism that selectively attenuates the translocation of newly synthesized proteins into the endoplasmic reticulum and reroutes them to the cytosol for proteasomal degradation. BAG6 may ensure the proper degradation of these proteins and thereby protects the endoplasmic reticulum from protein overload upon stress. By inhibiting the polyubiquitination and subsequent proteasomal degradation of HSPA2 it may also play a role in the assembly of the synaptonemal complex during spermatogenesis. Also positively regulates apoptosis by interacting with and stabilizing the proapoptotic factor AIFM1. By controlling the steady-state expression of the IGF1R receptor, indirectly regulates the insulin-like growth factor receptor signaling pathway. Its function is as follows. Involved in DNA damage-induced apoptosis: following DNA damage, accumulates in the nucleus and forms a complex with p300/EP300, enhancing p300/EP300-mediated p53/TP53 acetylation leading to increase p53/TP53 transcriptional activity. When nuclear, may also act as a component of some chromatin regulator complex that regulates histone 3 'Lys-4' dimethylation (H3K4me2). Released extracellularly via exosomes, it is a ligand of the natural killer/NK cells receptor NCR3 and stimulates NK cells cytotoxicity. It may thereby trigger NK cells cytotoxicity against neighboring tumor cells and immature myeloid dendritic cells (DC). Functionally, may mediate ricin-induced apoptosis. This chain is Large proline-rich protein BAG6, found in Rattus norvegicus (Rat).